The following is a 730-amino-acid chain: Hepatocyte growth factor (730 aa).

The first 31 residues, Met1–Gly31, serve as a signal peptide directing secretion. The residue at position 32 (Gln32) is a Pyrrolidone carboxylic acid. Residues Asn37–Asp123 form the PAN domain. 8 disulfide bridges follow: Cys70–Cys96, Cys74–Cys84, Cys128–Cys206, Cys149–Cys189, Cys177–Cys201, Cys211–Cys288, Cys232–Cys271, and Cys260–Cys283. 2 Kringle domains span residues Cys128–Cys206 and Cys211–Cys288. Residue Asn294 is glycosylated (N-linked (GlcNAc...) asparagine). 11 cysteine pairs are disulfide-bonded: Cys305–Cys383, Cys326–Cys365, Cys354–Cys377, Cys391–Cys469, Cys412–Cys452, Cys440–Cys464, Cys487–Cys606, Cys519–Cys535, Cys614–Cys681, Cys644–Cys660, and Cys671–Cys699. Kringle domains are found at residues Cys305–Cys383 and Cys391–Cys469. The Peptidase S1 domain maps to Val495–Leu723. N-linked (GlcNAc...) asparagine glycans are attached at residues Asn568 and Asn655.

The protein belongs to the peptidase S1 family. Plasminogen subfamily. In terms of assembly, dimer of an alpha chain and a beta chain linked by a disulfide bond. Interacts with SRPX2; the interaction increases HGF mitogenic activity. Post-translationally, the single-chain precursor undergoes proteolytic processing by TMPRSS13 resulting in an active two-chain form. The single-chain precursor undergoes proteolytic processing by HGFAC resulting in an active two-chain form.

Its function is as follows. Potent mitogen for mature parenchymal hepatocyte cells, seems to be a hepatotrophic factor, and acts as a growth factor for a broad spectrum of tissues and cell types. Activating ligand for the receptor tyrosine kinase MET by binding to it and promoting its dimerization. Activates MAPK signaling following TMPRSS13 cleavage and activation. The chain is Hepatocyte growth factor (HGF) from Bos taurus (Bovine).